The primary structure comprises 570 residues: Sulfite reductase [NADPH] hemoprotein beta-component (570 aa).

[4Fe-4S] cluster contacts are provided by Cys-434, Cys-440, Cys-479, and Cys-483. Cys-483 lines the siroheme pocket.

It belongs to the nitrite and sulfite reductase 4Fe-4S domain family. As to quaternary structure, alpha(8)-beta(8). The alpha component is a flavoprotein, the beta component is a hemoprotein. It depends on siroheme as a cofactor. [4Fe-4S] cluster is required as a cofactor.

It catalyses the reaction hydrogen sulfide + 3 NADP(+) + 3 H2O = sulfite + 3 NADPH + 4 H(+). The protein operates within sulfur metabolism; hydrogen sulfide biosynthesis; hydrogen sulfide from sulfite (NADPH route): step 1/1. Its function is as follows. Component of the sulfite reductase complex that catalyzes the 6-electron reduction of sulfite to sulfide. This is one of several activities required for the biosynthesis of L-cysteine from sulfate. The protein is Sulfite reductase [NADPH] hemoprotein beta-component (cysI) of Salmonella typhimurium (strain LT2 / SGSC1412 / ATCC 700720).